The primary structure comprises 209 residues: Thymidylate kinase (209 aa).

10–17 (GLDGAGKS) serves as a coordination point for ATP.

The protein belongs to the thymidylate kinase family.

The catalysed reaction is dTMP + ATP = dTDP + ADP. In terms of biological role, phosphorylation of dTMP to form dTDP in both de novo and salvage pathways of dTTP synthesis. This Francisella tularensis subsp. holarctica (strain OSU18) protein is Thymidylate kinase.